The primary structure comprises 878 residues: Staphylococcal nuclease domain-containing protein 1 (878 aa).

TNase-like domains follow at residues 3-142 (QYVS…IWGP) and 167-312 (KKLN…IWKN). At Ser316 the chain carries Phosphoserine. TNase-like domains are found at residues 326-464 (KDYS…MWSG) and 493-626 (RKLS…MWHD). Residues 695-755 (KINVGMNVAA…SSLPDTYTKL (61 aa)) enclose the Tudor domain.

The protein localises to the cytoplasm. The protein resides in the cytosol. The protein is Staphylococcal nuclease domain-containing protein 1 of Schizosaccharomyces pombe (strain 972 / ATCC 24843) (Fission yeast).